The primary structure comprises 464 residues: Argininosuccinate lyase (464 aa).

Ala2 is subject to N-acetylalanine. An N6-acetyllysine modification is found at Lys7. Ser27 provides a ligand contact to 2-(N(omega)-L-arginino)succinate. An N6-acetyllysine modification is found at Lys69. Residues Asn114 and Thr159 each contribute to the 2-(N(omega)-L-arginino)succinate site. Residue His160 is the Proton acceptor of the active site. Residue Ser281 is the Proton donor of the active site. Lys288 is subject to N6-acetyllysine. The 2-(N(omega)-L-arginino)succinate site is built by Asn289, Tyr321, Gln326, and Lys329.

Belongs to the lyase 1 family. Argininosuccinate lyase subfamily. Homotetramer. Forms tissue-specific complexes with ASS1, SLC7A1, HSP90AA1 and nitric oxide synthase NOS1, NOS2 or NOS3; the complex maintenance is independent of ASL catalytic function. Acetylation modifies enzyme activity in response to alterations of extracellular nutrient availability. Acetylation increased with trichostin A (TSA) or with nicotinamide (NAM). Glucose increases acetylation by about a factor of 3 with decreasing enzyme activity. Acetylation on Lys-288 is decreased on the addition of extra amino acids resulting in activation of enzyme activity.

The catalysed reaction is 2-(N(omega)-L-arginino)succinate = fumarate + L-arginine. Its pathway is amino-acid biosynthesis; L-arginine biosynthesis; L-arginine from L-ornithine and carbamoyl phosphate: step 3/3. The protein operates within nitrogen metabolism; urea cycle; L-arginine and fumarate from (N(omega)-L-arginino)succinate: step 1/1. Enzyme activity is regulated by acetylation. Its function is as follows. Catalyzes the reversible cleavage of L-argininosuccinate to fumarate and L-arginine, an intermediate step reaction in the urea cycle mostly providing for hepatic nitrogen detoxification into excretable urea as well as de novo L-arginine synthesis in nonhepatic tissues. Essential regulator of intracellular and extracellular L-arginine pools. As part of citrulline-nitric oxide cycle, forms tissue-specific multiprotein complexes with argininosuccinate synthase ASS1, transport protein SLC7A1 and nitric oxide synthase NOS1, NOS2 or NOS3, allowing for cell-autonomous L-arginine synthesis while channeling extracellular L-arginine to nitric oxide synthesis pathway. In Macaca fascicularis (Crab-eating macaque), this protein is Argininosuccinate lyase (ASL).